The sequence spans 200 residues: MIGHLRGIIVEKQPPYLLLEVAGVGYEITAPLSTFYHLPEPQKEILLYTHLIVREDAHTLYGFHNDHERRLFRALIKVNGVGPKLALAILSGIGPDEFVHCVLNQNIDQLVRIPGVGRKTAERLVIETKDGLSRWHTNDTPSPEGLRSSNTQPTQDAISALMALGYKPQEAKRAIDAIQKPDLSAETLIRLALKQMVLGT.

The interval 1-64 (MIGHLRGIIV…EDAHTLYGFH (64 aa)) is domain I. The tract at residues 65–143 (NDHERRLFRA…RWHTNDTPSP (79 aa)) is domain II. The disordered stretch occupies residues 133–152 (SRWHTNDTPSPEGLRSSNTQ). The segment at 144–148 (EGLRS) is flexible linker. The tract at residues 149 to 200 (SNTQPTQDAISALMALGYKPQEAKRAIDAIQKPDLSAETLIRLALKQMVLGT) is domain III.

The protein belongs to the RuvA family. Homotetramer. Forms an RuvA(8)-RuvB(12)-Holliday junction (HJ) complex. HJ DNA is sandwiched between 2 RuvA tetramers; dsDNA enters through RuvA and exits via RuvB. An RuvB hexamer assembles on each DNA strand where it exits the tetramer. Each RuvB hexamer is contacted by two RuvA subunits (via domain III) on 2 adjacent RuvB subunits; this complex drives branch migration. In the full resolvosome a probable DNA-RuvA(4)-RuvB(12)-RuvC(2) complex forms which resolves the HJ.

It is found in the cytoplasm. In terms of biological role, the RuvA-RuvB-RuvC complex processes Holliday junction (HJ) DNA during genetic recombination and DNA repair, while the RuvA-RuvB complex plays an important role in the rescue of blocked DNA replication forks via replication fork reversal (RFR). RuvA specifically binds to HJ cruciform DNA, conferring on it an open structure. The RuvB hexamer acts as an ATP-dependent pump, pulling dsDNA into and through the RuvAB complex. HJ branch migration allows RuvC to scan DNA until it finds its consensus sequence, where it cleaves and resolves the cruciform DNA. The sequence is that of Holliday junction branch migration complex subunit RuvA from Coxiella burnetii (strain Dugway 5J108-111).